The sequence spans 284 residues: Pantothenate synthetase (284 aa).

30–37 is an ATP binding site; the sequence is MGALHNGH. The Proton donor role is filled by histidine 37. Residue glutamine 61 coordinates (R)-pantoate. Glutamine 61 provides a ligand contact to beta-alanine. 147–150 serves as a coordination point for ATP; it reads GEKD. Glutamine 153 is a (R)-pantoate binding site. Residues leucine 176 and 184 to 187 each bind ATP; that span reads SSSR.

The protein belongs to the pantothenate synthetase family. In terms of assembly, homodimer.

It localises to the cytoplasm. It catalyses the reaction (R)-pantoate + beta-alanine + ATP = (R)-pantothenate + AMP + diphosphate + H(+). The protein operates within cofactor biosynthesis; (R)-pantothenate biosynthesis; (R)-pantothenate from (R)-pantoate and beta-alanine: step 1/1. Catalyzes the condensation of pantoate with beta-alanine in an ATP-dependent reaction via a pantoyl-adenylate intermediate. This Bartonella henselae (strain ATCC 49882 / DSM 28221 / CCUG 30454 / Houston 1) (Rochalimaea henselae) protein is Pantothenate synthetase.